A 128-amino-acid polypeptide reads, in one-letter code: Large ribosomal subunit protein bL12 (128 aa).

It belongs to the bacterial ribosomal protein bL12 family. Homodimer. Part of the ribosomal stalk of the 50S ribosomal subunit. Forms a multimeric L10(L12)X complex, where L10 forms an elongated spine to which 2 to 4 L12 dimers bind in a sequential fashion. Binds GTP-bound translation factors.

Forms part of the ribosomal stalk which helps the ribosome interact with GTP-bound translation factors. Is thus essential for accurate translation. The chain is Large ribosomal subunit protein bL12 from Thermotoga petrophila (strain ATCC BAA-488 / DSM 13995 / JCM 10881 / RKU-1).